A 75-amino-acid polypeptide reads, in one-letter code: Small ribosomal subunit protein bS18 (75 aa).

Belongs to the bacterial ribosomal protein bS18 family. In terms of assembly, part of the 30S ribosomal subunit. Forms a tight heterodimer with protein bS6.

In terms of biological role, binds as a heterodimer with protein bS6 to the central domain of the 16S rRNA, where it helps stabilize the platform of the 30S subunit. The protein is Small ribosomal subunit protein bS18 of Hydrogenovibrio crunogenus (strain DSM 25203 / XCL-2) (Thiomicrospira crunogena).